The sequence spans 541 residues: Probable inorganic phosphate transporter 1-8 (541 aa).

The Cytoplasmic segment spans residues 1 to 28; it reads MARQEQQQHLQVLSALDAAKTQWYHFTA. Residues 29–49 traverse the membrane as a helical segment; sequence IVVAGMGFFTDAYDLFCISLV. Over 50 to 74 the chain is Extracellular; it reads TKLLGRIYYTDLAKENPGSLPPNVA. A helical transmembrane segment spans residues 75-95; sequence AAVNGVAFCGTLAGQLFFGWL. Over 96–102 the chain is Cytoplasmic; sequence GDKLGRK. A helical transmembrane segment spans residues 103–123; sequence SVYGMTLLMMVICSIASGLSF. Residues 124 to 126 are Extracellular-facing; that stretch reads SHT. A helical membrane pass occupies residues 127 to 147; sequence PTSVMATLCFFRFWLGFGIGG. Residues 148-168 lie on the Cytoplasmic side of the membrane; the sequence is DYPLSATIMSEYANKKTRGAF. Residues 169–189 form a helical membrane-spanning segment; that stretch reads IAAVFAMQGFGILAGGIVTLI. Over 190–215 the chain is Extracellular; sequence ISSAFRAGFPAPAYQDDRAGSTVRQA. The helical transmembrane segment at 216-236 threads the bilayer; the sequence is DYVWRIILMLGAMPALLTYYW. Residues 237–297 are Cytoplasmic-facing; that stretch reads RMKMPETARY…GLFSRQFARR (61 aa). The chain crosses the membrane as a helical span at residues 298 to 318; it reads HGLHLVGTATTWFLLDIAFYS. Over 319–353 the chain is Extracellular; that stretch reads QNLFQKDIFTSINWIPKAKTMSALEEVFRIARAQT. The helical transmembrane segment at 354–374 threads the bilayer; it reads LIALCGTVPGYWFTVFLIDIV. The Cytoplasmic segment spans residues 375-376; that stretch reads GR. Residues 377–397 traverse the membrane as a helical segment; sequence FAIQLLGFFMMTVFMLGLAVP. Residues 398–404 lie on the Extracellular side of the membrane; the sequence is YHHWTTK. A helical transmembrane segment spans residues 405–425; the sequence is GNHIGFVVMYAFTFFFANFGP. Topologically, residues 426–447 are cytoplasmic; sequence NSTTFIVPAEIFPARLRSTCHG. The helical transmembrane segment at 448–468 threads the bilayer; it reads ISAAAGKAGAIIGSFGFLYAA. At 469–486 the chain is on the extracellular side; the sequence is QDPHKPDAGYKPGIGVRN. A helical transmembrane segment spans residues 487 to 507; sequence SLFVLAGCNLLGFICTFLVPE. Residues 508-541 lie on the Cytoplasmic side of the membrane; it reads SKGKSLEEMSGEAEDDDDEVAAAGGGAAVRPQTA. Positions 514-541 are disordered; it reads EEMSGEAEDDDDEVAAAGGGAAVRPQTA. Over residues 516-527 the composition is skewed to acidic residues; that stretch reads MSGEAEDDDDEV.

This sequence belongs to the major facilitator superfamily. Phosphate:H(+) symporter (TC 2.A.1.9) family.

The protein resides in the membrane. Its function is as follows. High-affinity transporter for external inorganic phosphate. In Oryza sativa subsp. japonica (Rice), this protein is Probable inorganic phosphate transporter 1-8 (PHT1-8).